The following is a 529-amino-acid chain: Glycerol kinase 5 (529 aa).

Residues Thr22 and Thr23 each coordinate ATP. Positions 92, 269, and 270 each coordinate glycerol. ATP is bound by residues Thr291, Gly334, and Gly434.

It belongs to the FGGY kinase family.

The protein resides in the cytoplasm. It carries out the reaction glycerol + ATP = sn-glycerol 3-phosphate + ADP + H(+). Its pathway is polyol metabolism; glycerol degradation via glycerol kinase pathway; sn-glycerol 3-phosphate from glycerol: step 1/1. In terms of biological role, skin-specific kinase that plays a key role in glycerol metabolism, catalyzing its phosphorylation to produce sn-glycerol 3-phosphate. Involved in skin-specific regulation of sterol regulatory element-binding protein (SREBP) processing and lipid biosynthesis. This chain is Glycerol kinase 5 (gk5), found in Danio rerio (Zebrafish).